Consider the following 308-residue polypeptide: tRNA pseudouridine synthase B (308 aa).

The active-site Nucleophile is aspartate 45.

The protein belongs to the pseudouridine synthase TruB family. Type 1 subfamily.

It carries out the reaction uridine(55) in tRNA = pseudouridine(55) in tRNA. In terms of biological role, responsible for synthesis of pseudouridine from uracil-55 in the psi GC loop of transfer RNAs. The sequence is that of tRNA pseudouridine synthase B from Gloeothece citriformis (strain PCC 7424) (Cyanothece sp. (strain PCC 7424)).